The sequence spans 368 residues: Glutamate 5-kinase (368 aa).

K9 provides a ligand contact to ATP. S49, D136, and N148 together coordinate substrate. ATP is bound by residues T168 to D169 and T210 to K216. The region spanning A275–E353 is the PUA domain.

The protein belongs to the glutamate 5-kinase family.

The protein resides in the cytoplasm. The enzyme catalyses L-glutamate + ATP = L-glutamyl 5-phosphate + ADP. It participates in amino-acid biosynthesis; L-proline biosynthesis; L-glutamate 5-semialdehyde from L-glutamate: step 1/2. Its function is as follows. Catalyzes the transfer of a phosphate group to glutamate to form L-glutamate 5-phosphate. This is Glutamate 5-kinase from Haemophilus influenzae (strain ATCC 51907 / DSM 11121 / KW20 / Rd).